Here is a 126-residue protein sequence, read N- to C-terminus: UPF0047 protein AF_2050 (126 aa).

Belongs to the UPF0047 family.

The chain is UPF0047 protein AF_2050 from Archaeoglobus fulgidus (strain ATCC 49558 / DSM 4304 / JCM 9628 / NBRC 100126 / VC-16).